Consider the following 133-residue polypeptide: Antifungal protein ginkbilobin-like protein 1 (133 aa).

The signal sequence occupies residues M1 to G24. Residues T28–I133 enclose the Gnk2-homologous domain. Cystine bridges form between C35–C111, C87–C96, and C99–C124. N36 lines the alpha-D-mannopyranose pocket. R118 and E129 together coordinate alpha-D-mannopyranose.

Its function is as follows. Exerts antifungal activity through its carbohydrate-binding specificity. The chain is Antifungal protein ginkbilobin-like protein 1 from Picea sitchensis (Sitka spruce).